A 312-amino-acid chain; its full sequence is Ribosomal RNA small subunit methyltransferase H (312 aa).

S-adenosyl-L-methionine is bound by residues 36 to 38 (GGH), D55, F81, D103, and Q110.

It belongs to the methyltransferase superfamily. RsmH family.

Its subcellular location is the cytoplasm. It carries out the reaction cytidine(1402) in 16S rRNA + S-adenosyl-L-methionine = N(4)-methylcytidine(1402) in 16S rRNA + S-adenosyl-L-homocysteine + H(+). Functionally, specifically methylates the N4 position of cytidine in position 1402 (C1402) of 16S rRNA. The protein is Ribosomal RNA small subunit methyltransferase H of Marinomonas sp. (strain MWYL1).